A 73-amino-acid chain; its full sequence is Large ribosomal subunit protein bL31 (73 aa).

This sequence belongs to the bacterial ribosomal protein bL31 family. Type A subfamily. As to quaternary structure, part of the 50S ribosomal subunit.

Binds the 23S rRNA. The protein is Large ribosomal subunit protein bL31 of Bartonella bacilliformis (strain ATCC 35685 / KC583 / Herrer 020/F12,63).